The chain runs to 554 residues: Membrane protein insertase YidC (554 aa).

Helical transmembrane passes span valine 7–glutamine 24, valine 362–phenylalanine 382, leucine 436–valine 456, proline 475–proline 495, and proline 510–valine 530.

This sequence belongs to the OXA1/ALB3/YidC family. Type 1 subfamily. Interacts with the Sec translocase complex via SecD. Specifically interacts with transmembrane segments of nascent integral membrane proteins during membrane integration.

It is found in the cell inner membrane. Functionally, required for the insertion and/or proper folding and/or complex formation of integral membrane proteins into the membrane. Involved in integration of membrane proteins that insert both dependently and independently of the Sec translocase complex, as well as at least some lipoproteins. Aids folding of multispanning membrane proteins. The polypeptide is Membrane protein insertase YidC (Burkholderia vietnamiensis (strain G4 / LMG 22486) (Burkholderia cepacia (strain R1808))).